Here is a 937-residue protein sequence, read N- to C-terminus: Protein SEY1 homolog (937 aa).

The Cytoplasmic portion of the chain corresponds to 1-848 (MEKGVEKTQI…ETGSKMSLKN (848 aa)). A GB1/RHD3-type G domain is found at 34–280 (GFSYNVIAVL…IPSDGFAQYC (247 aa)). A GTP-binding site is contributed by 44–51 (GSQSSGKS). Coiled-coil stretches lie at residues 319–339 (NKEI…NFKE) and 725–750 (YLDE…IIIQ). The chain crosses the membrane as a helical span at residues 849-869 (VPVVFWIILLLFGWNEILFFI). Over 870–872 (RMF) the chain is Lumenal. The chain crosses the membrane as a helical span at residues 873 to 893 (FKLNVILPLFFAAAFIVSTFV). Residues 894-937 (YNGNTQALSYINKIIFYMAKNSYNFFKHIQAISNPPPKNVQKQE) lie on the Cytoplasmic side of the membrane.

Belongs to the TRAFAC class dynamin-like GTPase superfamily. GB1/RHD3 GTPase family. RHD3 subfamily.

It localises to the endoplasmic reticulum membrane. Probable GTP-binding protein involved in generating and maintaining the structure of the tubular endoplasmic reticulum network. This chain is Protein SEY1 homolog, found in Plasmodium falciparum (isolate 3D7).